Consider the following 335-residue polypeptide: 1D-myo-inositol 2-acetamido-2-deoxy-alpha-D-glucopyranoside deacetylase (335 aa).

Positions 19, 22, and 158 each coordinate Zn(2+).

This sequence belongs to the MshB deacetylase family. Zn(2+) is required as a cofactor.

It catalyses the reaction 1D-myo-inositol 2-acetamido-2-deoxy-alpha-D-glucopyranoside + H2O = 1D-myo-inositol 2-amino-2-deoxy-alpha-D-glucopyranoside + acetate. Its function is as follows. Catalyzes the deacetylation of 1D-myo-inositol 2-acetamido-2-deoxy-alpha-D-glucopyranoside (GlcNAc-Ins) in the mycothiol biosynthesis pathway. The protein is 1D-myo-inositol 2-acetamido-2-deoxy-alpha-D-glucopyranoside deacetylase of Corynebacterium urealyticum (strain ATCC 43042 / DSM 7109).